Consider the following 38-residue polypeptide: Potassium channel toxin alpha-KTx 2.3 (38 aa).

3 disulfides stabilise this stretch: Cys7/Cys29, Cys13/Cys34, and Cys17/Cys36.

This sequence belongs to the short scorpion toxin superfamily. Potassium channel inhibitor family. Alpha-KTx 02 subfamily. As to expression, expressed by the venom gland.

The protein localises to the secreted. Functionally, inhibitor of voltage-gated potassium channels (Kv). It is capable of displacing the binding of radio-labeled noxiustoxin (AC P08815) to rat brain synaptosomes with high affinity (about 100 pM). It is also capable of inhibiting transient potassium-currents (resembling I(A)-type currents), in cultured rat cerebellar granule cells. About 50% of the peak currents are reduced by application of a 1.5 uM solution of this toxin. This chain is Potassium channel toxin alpha-KTx 2.3, found in Centruroides limpidus (Mexican scorpion).